The primary structure comprises 90 residues: Probable Fe(2+)-trafficking protein (90 aa).

The protein belongs to the Fe(2+)-trafficking protein family.

Its function is as follows. Could be a mediator in iron transactions between iron acquisition and iron-requiring processes, such as synthesis and/or repair of Fe-S clusters in biosynthetic enzymes. This Paracidovorax citrulli (strain AAC00-1) (Acidovorax citrulli) protein is Probable Fe(2+)-trafficking protein.